The primary structure comprises 115 residues: Flagellar transcriptional regulator FlhD (115 aa).

The protein belongs to the FlhD family. Homodimer; disulfide-linked. Forms a heterohexamer composed of two FlhC and four FlhD subunits. Each FlhC binds a FlhD dimer, forming a heterotrimer, and a hexamer assembles by dimerization of two heterotrimers.

The protein localises to the cytoplasm. Functionally, functions in complex with FlhC as a master transcriptional regulator that regulates transcription of several flagellar and non-flagellar operons by binding to their promoter region. Activates expression of class 2 flagellar genes, including fliA, which is a flagellum-specific sigma factor that turns on the class 3 genes. Also regulates genes whose products function in a variety of physiological pathways. In Edwardsiella ictaluri (strain 93-146), this protein is Flagellar transcriptional regulator FlhD.